A 304-amino-acid polypeptide reads, in one-letter code: Ribosomal RNA small subunit methyltransferase H (304 aa).

Residues 37–39, Asp-57, Phe-79, Asp-100, and His-107 each bind S-adenosyl-L-methionine; that span reads AGH.

Belongs to the methyltransferase superfamily. RsmH family.

The protein localises to the cytoplasm. It catalyses the reaction cytidine(1402) in 16S rRNA + S-adenosyl-L-methionine = N(4)-methylcytidine(1402) in 16S rRNA + S-adenosyl-L-homocysteine + H(+). Specifically methylates the N4 position of cytidine in position 1402 (C1402) of 16S rRNA. The chain is Ribosomal RNA small subunit methyltransferase H from Bacteroides thetaiotaomicron (strain ATCC 29148 / DSM 2079 / JCM 5827 / CCUG 10774 / NCTC 10582 / VPI-5482 / E50).